Consider the following 211-residue polypeptide: Thymidylate kinase (211 aa).

10–17 serves as a coordination point for ATP; that stretch reads GIDGSGKT.

It belongs to the thymidylate kinase family.

The enzyme catalyses dTMP + ATP = dTDP + ADP. Its function is as follows. Phosphorylation of dTMP to form dTDP in both de novo and salvage pathways of dTTP synthesis. The chain is Thymidylate kinase from Prochlorococcus marinus (strain NATL1A).